The sequence spans 415 residues: D-galactonate dehydratase family member RspA (415 aa).

Substrate-binding residues include Asn-48 and His-133. The active-site Proton donor/acceptor is the Tyr-170. Asp-223 provides a ligand contact to Mg(2+). The active-site Proton donor/acceptor is the His-225. Mg(2+)-binding residues include Glu-249 and Glu-275. 5 residues coordinate substrate: Glu-275, Arg-296, His-325, Asp-329, and Glu-352.

This sequence belongs to the mandelate racemase/muconate lactonizing enzyme family. GalD subfamily. Mg(2+) serves as cofactor.

It catalyses the reaction D-mannonate = 2-dehydro-3-deoxy-D-gluconate + H2O. Functionally, has low D-mannonate dehydratase activity (in vitro), suggesting that this is not a physiological substrate and that it has no significant role in D-mannonate degradation in vivo. Has no detectable activity with a panel of 70 other acid sugars (in vitro). This Escherichia coli (strain MS 21-1) protein is D-galactonate dehydratase family member RspA (rspA).